The sequence spans 680 residues: Multisubstrate pseudouridine synthase 7 (680 aa).

Basic and acidic residues-rich tracts occupy residues 1 to 30 (MSQE…RNGL) and 99 to 116 (ILSK…KDSS). 3 disordered regions span residues 1 to 42 (MSQE…DLSG), 99 to 136 (ILSK…EPAT), and 206 to 229 (TKGN…RRDP). Polar residues predominate over residues 206–216 (TKGNGTFTVSK). The active-site Nucleophile is D277. Residues 358 to 596 (GFINYFGLQR…PGDYRKLLVR (239 aa)) enclose the TRUD domain.

The protein belongs to the pseudouridine synthase TruD family.

The protein resides in the nucleus. It is found in the cytoplasm. It carries out the reaction uridine in 5S rRNA = pseudouridine in 5S rRNA. The enzyme catalyses uridine in snRNA = pseudouridine in snRNA. It catalyses the reaction uridine(13) in tRNA = pseudouridine(13) in tRNA. The catalysed reaction is a uridine in mRNA = a pseudouridine in mRNA. Functionally, catalyzes pseudouridylation at position 35 in U2 snRNA stem-loop II region which induces particular conformation of the mRNA-U2 snRNA duplex and places the nucleophile in an accessible position for the first step of splicing. Also catalyzes pseudouridylation at position 56 in U2 snRNA. Also catalyzes pseudouridylation at position 50 in 5S rRNA, position 13 in cytoplasmic tRNAs, and position 35 in pre-tRNA(Tyr). Pseudouridine residues in tRNAs may stabilize the local RNA conformation, favor interactions with protein partners and play an important role in the stabilization of the codon-anticodon interaction with mRNA. Also catalyzes pseudouridylation of mRNAs in response to heat shock: mediates pseudouridylation of mRNAs with the consensus sequence 5'-UGUAR-3'. This chain is Multisubstrate pseudouridine synthase 7 (pus7), found in Schizosaccharomyces pombe (strain 972 / ATCC 24843) (Fission yeast).